A 102-amino-acid polypeptide reads, in one-letter code: Large ribosomal subunit protein bL21 (102 aa).

It belongs to the bacterial ribosomal protein bL21 family. Part of the 50S ribosomal subunit. Contacts protein L20.

Its function is as follows. This protein binds to 23S rRNA in the presence of protein L20. The chain is Large ribosomal subunit protein bL21 from Agathobacter rectalis (strain ATCC 33656 / DSM 3377 / JCM 17463 / KCTC 5835 / VPI 0990) (Eubacterium rectale).